A 609-amino-acid chain; its full sequence is Tyrosine-protein kinase transforming protein Fes (609 aa).

Disordered stretches follow at residues 1–20 and 152–208; these read AARADGTMGFSSELCSPQGH and RDSA…GGRT. One can recognise an F-BAR; degenerate domain in the interval 8–174; sequence MGFSSELCSP…SKDKDRDKAK (167 aa). 2 stretches are compositionally biased toward basic and acidic residues: residues 160–175 and 190–206; these read KYQEASKDKDRDKAKL and QDDRHSTSSSEQEREGG. Residues 247–336 enclose the SH2 domain; it reads WYHGALPRAE…KSGIVLNRAV (90 aa). The 262-residue stretch at 348 to 609 folds into the Protein kinase domain; the sequence is LVLGEQIGRG…ELQSIRKRHR (262 aa). ATP-binding positions include 354–362 and Lys377; that span reads IGRGNFGEV. The active-site Proton acceptor is the Asp470. Tyr500 carries the post-translational modification Phosphotyrosine; by autocatalysis.

Belongs to the protein kinase superfamily. Tyr protein kinase family. Fes/fps subfamily.

The enzyme catalyses L-tyrosyl-[protein] + ATP = O-phospho-L-tyrosyl-[protein] + ADP + H(+). This Felidae (cat family) protein is Tyrosine-protein kinase transforming protein Fes (V-FES).